A 274-amino-acid polypeptide reads, in one-letter code: Hydroxyethylthiazole kinase (274 aa).

Methionine 46 contacts substrate. ATP-binding residues include arginine 122 and threonine 173. A substrate-binding site is contributed by glycine 200.

This sequence belongs to the Thz kinase family. The cofactor is Mg(2+).

The catalysed reaction is 5-(2-hydroxyethyl)-4-methylthiazole + ATP = 4-methyl-5-(2-phosphooxyethyl)-thiazole + ADP + H(+). The protein operates within cofactor biosynthesis; thiamine diphosphate biosynthesis; 4-methyl-5-(2-phosphoethyl)-thiazole from 5-(2-hydroxyethyl)-4-methylthiazole: step 1/1. Catalyzes the phosphorylation of the hydroxyl group of 4-methyl-5-beta-hydroxyethylthiazole (THZ). The sequence is that of Hydroxyethylthiazole kinase from Clostridium tetani (strain Massachusetts / E88).